The primary structure comprises 145 residues: Alpha-amylase/trypsin inhibitor CM2 (145 aa).

The signal sequence occupies residues 1–25; it reads MASKSSITHLLLAAVLVSVFAAAAA.

Belongs to the protease inhibitor I6 (cereal trypsin/alpha-amylase inhibitor) family. As to expression, developing endosperm.

Its subcellular location is the secreted. In terms of biological role, alpha-amylase/trypsin inhibitor. It could be involved in insect defense mechanisms. This Triticum aestivum (Wheat) protein is Alpha-amylase/trypsin inhibitor CM2.